A 238-amino-acid polypeptide reads, in one-letter code: MRFYRPLGRISALTFDLDDTLYDNRPVILRTEREALTFVQNYHPALRSFQNEDLQRLRQAVREAEPEIYHDVTRWRFRSIEQAMLDAGLSAEEASAGAHAAMINFAKWRSRIDVPQQTHDTLKQLAKKWPLVAITNGNAQPELFGLGDYFEFVLRAGPHGRSKPFSDMYFLAAEKLNVPIGEILHVGDDLTTDVGGAIRSGMQACWIRPENGDLMQTWDSRLLPHLEISRLASLTSLI.

The Nucleophile role is filled by D16. The Mg(2+) site is built by D16, D18, and D188. 16–18 (DLD) contributes to the substrate binding site.

The protein belongs to the HAD-like hydrolase superfamily. It depends on Mg(2+) as a cofactor. Mn(2+) serves as cofactor. Co(2+) is required as a cofactor. Requires Zn(2+) as cofactor.

It catalyses the reaction 5-amino-6-(5-phospho-D-ribitylamino)uracil + H2O = 5-amino-6-(D-ribitylamino)uracil + phosphate. It participates in cofactor biosynthesis; riboflavin biosynthesis; 5-amino-6-(D-ribitylamino)uracil from GTP: step 4/4. Its function is as follows. Catalyzes the dephosphorylation of 5-amino-6-(5-phospho-D-ribitylamino)uracil, and thus could be involved in the riboflavin biosynthesis pathway. Is also able to dephosphorylate flavin mononucleotide (FMN) and other phosphoric acid esters. YigB is important for the formation of dormant persister cells. This Escherichia coli (strain K12) protein is 5-amino-6-(5-phospho-D-ribitylamino)uracil phosphatase YigB (yigB).